Here is a 214-residue protein sequence, read N- to C-terminus: Small ribosomal subunit protein uS3 (214 aa).

The region spanning 39-107 is the KH type-2 domain; sequence IRAYLLKKPA…EVWVAVEEVK (69 aa).

Belongs to the universal ribosomal protein uS3 family. Part of the 30S ribosomal subunit. Forms a tight complex with proteins S10 and S14.

Functionally, binds the lower part of the 30S subunit head. Binds mRNA in the 70S ribosome, positioning it for translation. The protein is Small ribosomal subunit protein uS3 of Protochlamydia amoebophila (strain UWE25).